The sequence spans 1549 residues: Zinc finger MYM-type protein 4 (1549 aa).

At Ala-2 the chain carries N-acetylalanine. The tract at residues 83-108 (VVSSDNEDEQDCSSKDNLVSSVHTDG) is disordered. A compositionally biased stretch (polar residues) spans 97 to 106 (KDNLVSSVHT). Thr-106 carries the post-translational modification Phosphothreonine. Phosphoserine is present on residues Ser-109 and Ser-121. Residues Lys-139 and Lys-148 each participate in a glycyl lysine isopeptide (Lys-Gly) (interchain with G-Cter in SUMO2) cross-link. At Ser-161 the chain carries Phosphoserine. Lys-195 is covalently cross-linked (Glycyl lysine isopeptide (Lys-Gly) (interchain with G-Cter in SUMO2)). Ser-197 is subject to Phosphoserine. Residues Lys-201 and Lys-232 each participate in a glycyl lysine isopeptide (Lys-Gly) (interchain with G-Cter in SUMO2) cross-link. Position 242 is a phosphoserine (Ser-242). A Glycyl lysine isopeptide (Lys-Gly) (interchain with G-Cter in SUMO1); alternate cross-link involves residue Lys-250. A Glycyl lysine isopeptide (Lys-Gly) (interchain with G-Cter in SUMO2); alternate cross-link involves residue Lys-250. Residues 267 to 291 (GLLDRVKDEPDNAQEYSHGQQQKTQ) form a disordered region. Residues Lys-273, Lys-289, Lys-327, Lys-400, Lys-428, and Lys-430 each participate in a glycyl lysine isopeptide (Lys-Gly) (interchain with G-Cter in SUMO2) cross-link. Positions 280-290 (QEYSHGQQQKT) are enriched in polar residues. 9 consecutive MYM-type zinc fingers follow at residues 362–402 (QLFC…PKDV), 414–457 (KDFC…RHEV), 464–499 (HKLCSDACFSKFRSANNLTMNCCENCGGYCYSGSGQ), 510–544 (KKFCSSMCVTSYKQKSAKITPCALCKSLRSSAEMI), 554–592 (ELFCSVNCLSAYRVKMVTSAGVQVQCNSCKTSAIPQYHL), 600–631 (RNFCSYSCVVAFQNLFNKPTGMNSSVVPLSQG), 708–742 (FQFCGKNCCDEYKKINNVMAMCEYCKIEKIIKETV), 749–788 (KSFCSEGCKLLYKHDLGKRWGSHCKMCSYCLQTSPKLIQN), and 795–829 (EDFCCEECMSKYTVLFYQMAKCDGCKRQGKLSESL). Residues Lys-1035 and Lys-1062 each participate in a glycyl lysine isopeptide (Lys-Gly) (interchain with G-Cter in SUMO2) cross-link. Residues Ser-1065 and Ser-1072 each carry the phosphoserine modification. Residues Lys-1081 and Lys-1128 each participate in a glycyl lysine isopeptide (Lys-Gly) (interchain with G-Cter in SUMO2) cross-link. The disordered stretch occupies residues 1124–1185 (DSELKPFSKG…RRGRKKSVVP (62 aa)). Positions 1125-1135 (SELKPFSKGET) are enriched in basic and acidic residues. A compositionally biased stretch (basic residues) spans 1161–1182 (SRTRRRHRDGFPQPRRRGRKKS). 2 positions are modified to phosphoserine: Ser-1182 and Ser-1257. A Glycyl lysine isopeptide (Lys-Gly) (interchain with G-Cter in SUMO2) cross-link involves residue Lys-1432. Phosphoserine occurs at positions 1540, 1543, and 1548.

In terms of biological role, plays a role in the regulation of cell morphology and cytoskeletal organization. The protein is Zinc finger MYM-type protein 4 (Zmym4) of Mus musculus (Mouse).